The chain runs to 206 residues: Putative 3-methyladenine DNA glycosylase (206 aa).

This sequence belongs to the DNA glycosylase MPG family.

This chain is Putative 3-methyladenine DNA glycosylase, found in Rhodopseudomonas palustris (strain ATCC BAA-98 / CGA009).